The primary structure comprises 829 residues: pre-rRNA 2'-O-ribose RNA methyltransferase FTSJ3 (829 aa).

S-adenosyl-L-methionine contacts are provided by Gly-56, Trp-58, Asp-76, Asp-92, and Asp-117. Lys-157 serves as the catalytic Proton acceptor. The interval 332–367 (ISLSSEEEGDEEESAAETKQASEEEEEREEEEQLNR) is disordered. Phosphoserine is present on residues Ser-333, Ser-335, Ser-336, Ser-345, and Ser-353. Residues 336–346 (SEEEGDEEESA) show a composition bias toward acidic residues. The segment covering 354 to 363 (EEEEEREEEE) has biased composition (acidic residues). Arg-389 is modified (citrulline). Disordered stretches follow at residues 443 to 508 (FLSD…PLLV) and 528 to 634 (DGFS…GFEV). Acidic residues predominate over residues 456–473 (DAEDDDDTSLESDLDPEE). A phosphoserine mark is found at Ser-531 and Ser-544. Lys-570 is covalently cross-linked (Glycyl lysine isopeptide (Lys-Gly) (interchain with G-Cter in SUMO2)). Ser-575 bears the Phosphoserine mark. Residues Lys-626 and Lys-642 each participate in a glycyl lysine isopeptide (Lys-Gly) (interchain with G-Cter in SUMO2) cross-link. At Ser-659 the chain carries Phosphoserine. A Glycyl lysine isopeptide (Lys-Gly) (interchain with G-Cter in SUMO2) cross-link involves residue Lys-661. Phosphoserine is present on Ser-671. Lys-693 is covalently cross-linked (Glycyl lysine isopeptide (Lys-Gly) (interchain with G-Cter in SUMO2)). Residues 722-760 (IKKVAEAKARKKRRMLKKLEQTKKKAEAVVNTVDISERE) adopt a coiled-coil conformation. At Arg-766 the chain carries Citrulline. Positions 794–804 (VRRPAGVRGHF) are enriched in basic residues. The segment at 794-829 (VRRPAGVRGHFKVVDSRMKKDQRAQRKEQKRNHRRK) is disordered. Basic and acidic residues predominate over residues 805 to 820 (KVVDSRMKKDQRAQRK).

This sequence belongs to the class I-like SAM-binding methyltransferase superfamily. RNA methyltransferase RlmE family. SPB1 subfamily. In terms of assembly, interacts with NIP7. Post-translationally, citrullinated by PADI4.

It localises to the nucleus. The protein resides in the nucleolus. The enzyme catalyses a ribonucleotide in rRNA + S-adenosyl-L-methionine = a 2'-O-methylribonucleotide in rRNA + S-adenosyl-L-homocysteine + H(+). Functionally, RNA 2'-O-methyltransferase involved in the processing of the 34S pre-rRNA to 18S rRNA and in 40S ribosomal subunit formation. The sequence is that of pre-rRNA 2'-O-ribose RNA methyltransferase FTSJ3 (Ftsj3) from Rattus norvegicus (Rat).